Reading from the N-terminus, the 431-residue chain is Probable pectate lyase 1 (431 aa).

Residues 1 to 20 form the signal peptide; the sequence is MAVLPTWLLAMMCLLFFVGA. Residues N23, N28, and N65 are each glycosylated (N-linked (GlcNAc...) asparagine). Ca(2+) is bound by residues D227, D251, and D255. The active site involves R307.

It belongs to the polysaccharide lyase 1 family. Ca(2+) is required as a cofactor. Expressed in flowers, but not in leaves.

It carries out the reaction Eliminative cleavage of (1-&gt;4)-alpha-D-galacturonan to give oligosaccharides with 4-deoxy-alpha-D-galact-4-enuronosyl groups at their non-reducing ends.. It participates in glycan metabolism; pectin degradation; 2-dehydro-3-deoxy-D-gluconate from pectin: step 2/5. In Arabidopsis thaliana (Mouse-ear cress), this protein is Probable pectate lyase 1.